We begin with the raw amino-acid sequence, 166 residues long: Bacterial microcompartment shell protein EutK (166 aa).

Residues 4–88 (ALGLLEVDGM…PDDDTQWLVT (85 aa)) form the BMC domain. The 57-residue stretch at 109 to 165 (ESADELLALLTSVRQGMTAGEVAAHFGWPLEKARNALEQLFSAGTLRKRSSRYRLKP) folds into the EutK-Ctail domain.

Belongs to the bacterial microcompartments protein family. As to quaternary structure, monomeric in solution.

The protein resides in the bacterial microcompartment. It participates in amine and polyamine degradation; ethanolamine degradation. Functionally, probably a minor component of the bacterial microcompartment (BMC) shell dedicated to ethanolamine degradation. It might bind nucleic acids. The chain is Bacterial microcompartment shell protein EutK (eutK) from Escherichia coli (strain K12).